The primary structure comprises 333 residues: T-cell surface glycoprotein CD1b (333 aa).

The first 17 residues, 1 to 17, serve as a signal peptide directing secretion; sequence MLLLPFQLLAVLFPGGN. Residues 18–303 lie on the Extracellular side of the membrane; that stretch reads SEHAFQGPTS…YWRNPTSIGS (286 aa). N-linked (GlcNAc...) asparagine glycosylation is found at Asn38, Asn75, and Asn146. Intrachain disulfides connect Cys120/Cys184, Cys149/Cys163, and Cys224/Cys279. The 111-residue stretch at 185–295 folds into the Ig-like domain; that stretch reads PRYLLGVLNA…LEGQDIILYW (111 aa). Residue Asn258 is glycosylated (N-linked (GlcNAc...) asparagine). A helical membrane pass occupies residues 304–324; the sequence is IVLAIIVPSLLLLLCLALWYM. Residues 325–333 are Cytoplasmic-facing; that stretch reads RRRSYQNIP. Residues 329 to 332 carry the Internalization signal motif; the sequence is YQNI.

Heterodimer with B2M (beta-2-microglobulin). Interacts with saposin C. Expressed on cortical thymocytes, on certain T-cell leukemias, and in various other tissues.

The protein resides in the cell membrane. It localises to the endosome membrane. Its subcellular location is the lysosome membrane. Its function is as follows. Antigen-presenting protein that binds self and non-self lipid and glycolipid antigens and presents them to T-cell receptors on natural killer T-cells. This Homo sapiens (Human) protein is T-cell surface glycoprotein CD1b (CD1B).